A 226-amino-acid chain; its full sequence is Cytidylate kinase (226 aa).

10–18 (GPASSGKST) is an ATP binding site.

The protein belongs to the cytidylate kinase family. Type 1 subfamily.

The protein resides in the cytoplasm. It catalyses the reaction CMP + ATP = CDP + ADP. The catalysed reaction is dCMP + ATP = dCDP + ADP. This is Cytidylate kinase from Streptococcus pyogenes serotype M4 (strain MGAS10750).